Reading from the N-terminus, the 335-residue chain is Serpentine receptor class XA 10 (335 aa).

Over Met-1–Arg-10 the chain is Extracellular. A helical membrane pass occupies residues Ile-11 to Ser-31. The Cytoplasmic segment spans residues Leu-32–Tyr-46. The helical transmembrane segment at Ile-47–Leu-67 threads the bilayer. The Extracellular segment spans residues Pro-68–Ser-82. Residues Ile-83–Ile-103 traverse the membrane as a helical segment. Residues Leu-104–Lys-126 are Cytoplasmic-facing. The chain crosses the membrane as a helical span at residues Ile-127 to Leu-147. Residues Ser-148–Asn-177 lie on the Extracellular side of the membrane. A helical membrane pass occupies residues Tyr-178 to Phe-198. Over Lys-199–Met-238 the chain is Cytoplasmic. A helical membrane pass occupies residues Leu-239–Val-259. Topologically, residues Leu-260 to Leu-276 are extracellular. The chain crosses the membrane as a helical span at residues Ala-277–Phe-297. Topologically, residues Thr-298–Ala-319 are cytoplasmic.

It belongs to the nematode receptor-like protein srxa family.

Its subcellular location is the membrane. The chain is Serpentine receptor class XA 10 (srxa-10) from Caenorhabditis elegans.